The sequence spans 189 residues: dTTP/UTP pyrophosphatase (189 aa).

The active-site Proton acceptor is the Asp64.

Belongs to the Maf family. YhdE subfamily. It depends on a divalent metal cation as a cofactor.

It is found in the cytoplasm. The catalysed reaction is dTTP + H2O = dTMP + diphosphate + H(+). It catalyses the reaction UTP + H2O = UMP + diphosphate + H(+). Functionally, nucleoside triphosphate pyrophosphatase that hydrolyzes dTTP and UTP. May have a dual role in cell division arrest and in preventing the incorporation of modified nucleotides into cellular nucleic acids. The polypeptide is dTTP/UTP pyrophosphatase (Syntrophomonas wolfei subsp. wolfei (strain DSM 2245B / Goettingen)).